We begin with the raw amino-acid sequence, 58 residues long: Large ribosomal subunit protein bL32c (58 aa).

This sequence belongs to the bacterial ribosomal protein bL32 family.

It localises to the plastid. The protein localises to the chloroplast. The polypeptide is Large ribosomal subunit protein bL32c (rpl32) (Adiantum capillus-veneris (Maidenhair fern)).